The chain runs to 434 residues: Perilipin-3 (434 aa).

The interval 1-22 (MSADGAEADGSTQVTVEEPVQQ) is disordered. Ser-2 bears the N-acetylserine mark. Ser-31 is subject to Phosphoserine. An N6-acetyllysine modification is found at Lys-65. Ser-91 bears the Phosphoserine mark. Lys-122 is covalently cross-linked (Glycyl lysine isopeptide (Lys-Gly) (interchain with G-Cter in SUMO1)). Phosphoserine is present on residues Ser-130 and Ser-148. Thr-170 is modified (phosphothreonine). Residues Ser-175 and Ser-179 each carry the phosphoserine modification. Thr-216 bears the Phosphothreonine mark. 2 positions are modified to phosphoserine: Ser-217 and Ser-241. Tyr-251 bears the Phosphotyrosine mark. 2 coiled-coil regions span residues 252 to 280 (EHSLGKLRATKQRAQEALLQLSQALSLME) and 353 to 377 (TNVKDQVQQARRQVEDLQATFSSIH).

Belongs to the perilipin family. As to quaternary structure, homooligomer. Interacts with M6PR (via the cytoplasmic domain). Interacts with IGF2R (via the cytoplasmic domain). Post-translationally, phosphorylation at Tyr-251 by isoform 1 of CHKA (CHKalpha2) promotes dissociation from lipid droplets: dissociation is followed by recruitment of autophagosome machinery to lipid droplets and subsequent lipid droplet lipolysis.

The protein localises to the lipid droplet. It is found in the endosome membrane. The protein resides in the cytoplasm. In terms of biological role, structural component of lipid droplets, which is required for the formation and maintenance of lipid storage droplets. Required for the transport of mannose 6-phosphate receptors (MPR) from endosomes to the trans-Golgi network. The protein is Perilipin-3 (PLIN3) of Pongo abelii (Sumatran orangutan).